Reading from the N-terminus, the 224-residue chain is Large ribosomal subunit protein bL25 (224 aa).

The disordered stretch occupies residues 195-224 (TVEEVDEAAEVDAADVPATEQGTDESKDGE). Positions 197-207 (EEVDEAAEVDA) are enriched in acidic residues.

It belongs to the bacterial ribosomal protein bL25 family. CTC subfamily. As to quaternary structure, part of the 50S ribosomal subunit; part of the 5S rRNA/L5/L18/L25 subcomplex. Contacts the 5S rRNA. Binds to the 5S rRNA independently of L5 and L18.

Its function is as follows. This is one of the proteins that binds to the 5S RNA in the ribosome where it forms part of the central protuberance. The sequence is that of Large ribosomal subunit protein bL25 from Psychrobacter cryohalolentis (strain ATCC BAA-1226 / DSM 17306 / VKM B-2378 / K5).